The following is a 119-amino-acid chain: Protein TusC (119 aa).

This sequence belongs to the DsrF/TusC family. Heterohexamer, formed by a dimer of trimers. The hexameric TusBCD complex contains 2 copies each of TusB, TusC and TusD. The TusBCD complex interacts with TusE.

Its subcellular location is the cytoplasm. Its function is as follows. Part of a sulfur-relay system required for 2-thiolation of 5-methylaminomethyl-2-thiouridine (mnm(5)s(2)U) at tRNA wobble positions. The chain is Protein TusC from Citrobacter koseri (strain ATCC BAA-895 / CDC 4225-83 / SGSC4696).